Reading from the N-terminus, the 533-residue chain is Putative adhesin P1-like protein MPN_409 (533 aa).

2 disordered regions span residues 15 to 45 (KNHRGVDDITAPKTGAGSSSGTSTNTSGSRS) and 92 to 166 (SGWR…SITP). Low complexity predominate over residues 28–45 (TGAGSSSGTSTNTSGSRS). The span at 95-107 (RNDKNGQSDENHT) shows a compositional bias: basic and acidic residues.

It belongs to the adhesin P1 family.

The chain is Putative adhesin P1-like protein MPN_409 from Mycoplasma pneumoniae (strain ATCC 29342 / M129 / Subtype 1) (Mycoplasmoides pneumoniae).